The following is a 443-amino-acid chain: Chromosomal replication initiator protein DnaA (443 aa).

The segment at 1–67 (MDAWSRSLER…RELLAHFAGF (67 aa)) is domain I, interacts with DnaA modulators. The segment at 67 to 105 (FSDVFLEIGSRPRPVEAQNAPFSTPSAHVSSEPQVPFAG) is domain II. Residues 106–323 (NLDNHYTFAN…GALNTLTARA (218 aa)) form a domain III, AAA+ region region. ATP contacts are provided by Gly-151, Gly-153, Lys-154, and Thr-155. The segment at 324–443 (NFTGRAITTE…WDKLIRKLSE (120 aa)) is domain IV, binds dsDNA.

It belongs to the DnaA family. In terms of assembly, oligomerizes as a right-handed, spiral filament on DNA at oriC.

Its subcellular location is the cytoplasm. In terms of biological role, plays an essential role in the initiation and regulation of chromosomal replication. ATP-DnaA binds to the origin of replication (oriC) to initiate formation of the DNA replication initiation complex once per cell cycle. Binds the DnaA box (a 9 base pair repeat at the origin) and separates the double-stranded (ds)DNA. Forms a right-handed helical filament on oriC DNA; dsDNA binds to the exterior of the filament while single-stranded (ss)DNA is stabiized in the filament's interior. The ATP-DnaA-oriC complex binds and stabilizes one strand of the AT-rich DNA unwinding element (DUE), permitting loading of DNA polymerase. After initiation quickly degrades to an ADP-DnaA complex that is not apt for DNA replication. Binds acidic phospholipids. This chain is Chromosomal replication initiator protein DnaA, found in Stenotrophomonas maltophilia (strain R551-3).